We begin with the raw amino-acid sequence, 1014 residues long: MSSVIKTIVVKTLQCTVKCVCVGVRQQYGLLRRHPKTIACALVGGIIAHDVLHLYAAVYRVENPWEFVPTEGPRGVIVLRVYNALRFTAAKWRWNCWTIFGKFPFNSEQFSRIMETSTERKPDLRPLLVPAHETIEVYPCNNIHSHPRSAEFRSSANEYLVRSVRRAGYPPYVVSSSKRDFCDGNRFFYCPKDFGMQFRNDPISNNHALVFTDVDYYANMNRWLQLFLPTCLYTLVPTRLNYSNDEFAYRFENNEIVYNVTGGGEYRHSLWDYKGDTVTVVDEYGNLLIFDIEQRRVQGDEQHRLIWLLPKAKITDPLWIVGPTEWYDKLLVRKTVQQGRLKILWEPIADDLSIGLHGSNYSVSLKGELFEAIRTRISCKDSTPYVSDVERMLREAKHKNFLTDAPILYHCFQDDVIIRPNVVKTGSFPVTYNAIPKKAPSVTEDPKMPGQVVTTPLVSQPALFAGKGFNADKACIEGRIEKVRNVTKFPIKYVRYAAEFVKLVIPETIAGTGVPNSIGMIREEQDKVAQRARFDRVAPIMSTQTENSIKAFIKTEMYAAAKAPRNISTMAPEITIQSSAYSLPMAKIFKKIPWYCPGKNPKEITLRLAEVCLQDPDHELEEGDYTCMDGTQSPDYSDLLLLPIYMRYFAKQYRGQFKNLYNQIYKQRATTSSGVPYNPEMTIRSGSSITTHAGTLNNAFNIYAALRDMGYDETTAWDKVGAVFGDDSLNANHQGEFHSYIEHVTKVLGMRYKSNLRERGQPVLFLGRYFVDPITSYDSFADPMRTIGKLHATANKNVSVEQGAANKAHGYITTDSKTPIIGAWARRVLEITKKKFKNGTGEEQYRCSNAWPQKDEAAIRAAMAAVLEVDEAQLIAQNEAVLKVNSLDQFPVVFDTYYDHKQLAEVDGQLVGTDLHIKEEDERQPETSIDSVPSTGPPPSNGDPNAGGKPTDGPSKGKRKVKGRRPRTAGDPATLRLTDAGSSRRVKPPRKLRPEAKRGGRPIETLVFKNSSLS.

One can recognise a RdRp catalytic domain in the interval 618 to 740; it reads HELEEGDYTC…ANHQGEFHSY (123 aa). The interval 918–1014 is disordered; the sequence is KEEDERQPET…TLVFKNSSLS (97 aa). A compositionally biased stretch (basic residues) spans 956–967; it reads KGKRKVKGRRPR.

The protein belongs to the nodaviridae RNA polymerase family.

The enzyme catalyses RNA(n) + a ribonucleoside 5'-triphosphate = RNA(n+1) + diphosphate. RNA-dependent RNA polymerase which replicates the viral genome composed of 2 RNA segments, RNA1 and RNA2. The sequence is that of RNA-directed RNA polymerase from Pieris rapae (Small white butterfly).